The primary structure comprises 1065 residues: Carbamoyl phosphate synthase large chain (1065 aa).

The tract at residues 1-401 (MPKRRDIETI…SLLKAVRSLE (401 aa)) is carboxyphosphate synthetic domain. The ATP site is built by R129, R169, G175, G176, R208, I210, E215, G241, I242, H243, Q284, and E298. The region spanning 133 to 327 (RALMNELGEP…IAKLAAKIAV (195 aa)) is the ATP-grasp 1 domain. The Mg(2+) site is built by Q284, E298, and N300. Mn(2+)-binding residues include Q284, E298, and N300. An oligomerization domain region spans residues 402–546 (IGVHHLELNE…YSTYEEENES (145 aa)). The carbamoyl phosphate synthetic domain stretch occupies residues 547–929 (IVTEKPSVIV…ALYKGLVASG (383 aa)). In terms of domain architecture, ATP-grasp 2 spans 671–861 (EQALSELGIP…MANLATKAIL (191 aa)). Residues R707, R746, I748, E752, G777, V778, H779, S780, Q820, and E832 each coordinate ATP. The Mg(2+) site is built by Q820, E832, and N834. Residues Q820, E832, and N834 each contribute to the Mn(2+) site. In terms of domain architecture, MGS-like spans 930–1065 (IHIQPHGAVL…TAMTEGLVRS (136 aa)). The tract at residues 930–1065 (IHIQPHGAVL…TAMTEGLVRS (136 aa)) is allosteric domain.

It belongs to the CarB family. In terms of assembly, composed of two chains; the small (or glutamine) chain promotes the hydrolysis of glutamine to ammonia, which is used by the large (or ammonia) chain to synthesize carbamoyl phosphate. Tetramer of heterodimers (alpha,beta)4. Requires Mg(2+) as cofactor. Mn(2+) serves as cofactor.

The enzyme catalyses hydrogencarbonate + L-glutamine + 2 ATP + H2O = carbamoyl phosphate + L-glutamate + 2 ADP + phosphate + 2 H(+). The catalysed reaction is hydrogencarbonate + NH4(+) + 2 ATP = carbamoyl phosphate + 2 ADP + phosphate + 2 H(+). The protein operates within amino-acid biosynthesis; L-arginine biosynthesis; carbamoyl phosphate from bicarbonate: step 1/1. It participates in pyrimidine metabolism; UMP biosynthesis via de novo pathway; (S)-dihydroorotate from bicarbonate: step 1/3. Functionally, large subunit of the glutamine-dependent carbamoyl phosphate synthetase (CPSase). CPSase catalyzes the formation of carbamoyl phosphate from the ammonia moiety of glutamine, carbonate, and phosphate donated by ATP, constituting the first step of 2 biosynthetic pathways, one leading to arginine and/or urea and the other to pyrimidine nucleotides. The large subunit (synthetase) binds the substrates ammonia (free or transferred from glutamine from the small subunit), hydrogencarbonate and ATP and carries out an ATP-coupled ligase reaction, activating hydrogencarbonate by forming carboxy phosphate which reacts with ammonia to form carbamoyl phosphate. This is Carbamoyl phosphate synthase large chain from Bacillus caldolyticus.